The primary structure comprises 100 residues: MARKSLIQRERKRDKLEQKYHLIRRSSKKQISKVPSLSDKWEIHGKLQSPPRNSAPIRLHRRCFLTGRPRANYRDFGLSGHVLREMVHACLLPGATRSSW.

This sequence belongs to the universal ribosomal protein uS14 family. As to quaternary structure, part of the 30S ribosomal subunit.

The protein resides in the plastid. It localises to the chloroplast. In terms of biological role, binds 16S rRNA, required for the assembly of 30S particles. The chain is Small ribosomal subunit protein uS14c from Illicium oligandrum (Star anise).